A 577-amino-acid chain; its full sequence is Arginine--tRNA ligase (577 aa).

Residues 122 to 132 carry the 'HIGH' region motif; that stretch reads PNVAKEMHVGH.

Belongs to the class-I aminoacyl-tRNA synthetase family. As to quaternary structure, monomer.

The protein resides in the cytoplasm. It carries out the reaction tRNA(Arg) + L-arginine + ATP = L-arginyl-tRNA(Arg) + AMP + diphosphate. This is Arginine--tRNA ligase from Aliivibrio salmonicida (strain LFI1238) (Vibrio salmonicida (strain LFI1238)).